The following is a 261-amino-acid chain: MRIALGIEYDGSGYFGWQRQAEVDSVQGQLERALSIVANEPIGLFCAGRTDAGVHATGQVVHFDTNAIRNEGAWTLGVNANLPDNIAVRWVKEVDDSFHARFSATARRYRYVIYNHSFRPGILRHGVSHYHGNIDADKMHQAAQVLLGEQDFTSFRAVQCQSKTPFRNVHSVNVTRQGMYVIVDIAANAFLHHMVRNIVGSLLEIGLGNQPLTWMGDLLALKDRNQAAATAKPHGLYLVDVTYPEQYQLPKLALGPLFMLD.

The active-site Nucleophile is D51. A substrate-binding site is contributed by Y109.

The protein belongs to the tRNA pseudouridine synthase TruA family. In terms of assembly, homodimer.

The catalysed reaction is uridine(38/39/40) in tRNA = pseudouridine(38/39/40) in tRNA. Its function is as follows. Formation of pseudouridine at positions 38, 39 and 40 in the anticodon stem and loop of transfer RNAs. This is tRNA pseudouridine synthase A from Shewanella sp. (strain W3-18-1).